Reading from the N-terminus, the 357-residue chain is N-acetyl-gamma-glutamyl-phosphate reductase (357 aa).

The active site involves C160.

This sequence belongs to the NAGSA dehydrogenase family. Type 1 subfamily.

Its subcellular location is the cytoplasm. It carries out the reaction N-acetyl-L-glutamate 5-semialdehyde + phosphate + NADP(+) = N-acetyl-L-glutamyl 5-phosphate + NADPH + H(+). It functions in the pathway amino-acid biosynthesis; L-arginine biosynthesis; N(2)-acetyl-L-ornithine from L-glutamate: step 3/4. Functionally, catalyzes the NADPH-dependent reduction of N-acetyl-5-glutamyl phosphate to yield N-acetyl-L-glutamate 5-semialdehyde. The chain is N-acetyl-gamma-glutamyl-phosphate reductase from Parasynechococcus marenigrum (strain WH8102).